We begin with the raw amino-acid sequence, 604 residues long: NADP-dependent malic enzyme, mitochondrial (604 aa).

The segment at 29–50 (APAQGCHSKPGPARPVPLKKRG) is disordered. The active-site Proton donor is the Tyr-137. Arg-190 serves as a coordination point for NAD(+). The Proton acceptor role is filled by Lys-208. Positions 280, 281, and 304 each coordinate a divalent metal cation. Asp-304 lines the NAD(+) pocket. Ser-371 is subject to Phosphoserine. Residue Asn-443 participates in NAD(+) binding.

Belongs to the malic enzymes family. Mg(2+) is required as a cofactor. Requires Mn(2+) as cofactor. In terms of tissue distribution, expressed predominantly in organs with a low-division rate.

The protein resides in the mitochondrion matrix. It carries out the reaction (S)-malate + NADP(+) = pyruvate + CO2 + NADPH. The catalysed reaction is oxaloacetate + H(+) = pyruvate + CO2. Functionally, catalyzes the oxidative decarboxylation of (S)-malate to pyruvate using NADP(+) as a cofactor. Can also reverse the decarboxylation reaction, but only with significantly lower efficiency. This is NADP-dependent malic enzyme, mitochondrial from Homo sapiens (Human).